The following is a 188-amino-acid chain: Archaetidylinositol phosphate synthase (188 aa).

Transmembrane regions (helical) follow at residues 20 to 40 and 51 to 71; these read LASL…ITLL and ILAG…GALA. Mg(2+) contacts are provided by Asp-64, Asp-67, Asp-85, and Asp-89. The active-site Proton acceptor is the Asp-89. The next 2 membrane-spanning stretches (helical) occupy residues 96 to 116 and 147 to 167; these read ILFG…LTLI and IIII…YLVA.

This sequence belongs to the CDP-alcohol phosphatidyltransferase class-I family. The cofactor is Mn(2+). Requires Mg(2+) as cofactor.

The protein resides in the cell membrane. It carries out the reaction CDP-2,3-bis-O-(phytanyl)-sn-glycerol + 1D-myo-inositol 3-phosphate = saturated 1-archaetidyl-1D-myo-inositol 3-phosphate + CMP + H(+). Its pathway is lipid metabolism; phospholipid metabolism. In terms of biological role, catalyzes the formation of archaetidylinositol phosphate (AIP) from CDP-archaeol (CDP-ArOH or CDP-2,3-bis-(O-phytanyl)-sn-glycerol) and 1L-myo-inositol 1-phosphate (IP or 1D-myo-inositol 3-phosphate). AIP is a precursor of archaetidyl-myo-inositol (AI), an ether-type inositol phospholipid ubiquitously distributed in archaea membranes and essential for glycolipid biosynthesis in archaea. This chain is Archaetidylinositol phosphate synthase, found in Pyrococcus horikoshii (strain ATCC 700860 / DSM 12428 / JCM 9974 / NBRC 100139 / OT-3).